The sequence spans 447 residues: Nuclear envelope integral membrane protein 2 (447 aa).

Residues 1–28 (MGPRRLPWARPGPALGLLLLALAGAVPA) form the signal peptide. 5 consecutive transmembrane segments (helical) span residues 144-164 (EMLD…FHFA), 173-193 (FFYL…VLLA), 202-222 (STFW…IYCF), 235-255 (IYVL…CYQH), and 275-295 (AFVF…IIAV). Positions 410-438 (TRTESEQDETTSYIHEGDDENEDEIHEPI) are disordered.

Belongs to the NEMP family.

It is found in the nucleus inner membrane. The chain is Nuclear envelope integral membrane protein 2 (NEMP2) from Gallus gallus (Chicken).